The primary structure comprises 182 residues: Sec-independent protein translocase protein TatB (182 aa).

Residues 1 to 21 (MFDIGFSELLLVFVIGLIVLG) form a helical membrane-spanning segment. Disordered regions lie at residues 88–107 (AAES…ASDE) and 121–182 (TQHE…SDKP). A compositionally biased stretch (low complexity) spans 168–182 (AAPVVESSPSSSDKP).

This sequence belongs to the TatB family. As to quaternary structure, the Tat system comprises two distinct complexes: a TatABC complex, containing multiple copies of TatA, TatB and TatC subunits, and a separate TatA complex, containing only TatA subunits. Substrates initially bind to the TatABC complex, which probably triggers association of the separate TatA complex to form the active translocon.

It is found in the cell inner membrane. Its function is as follows. Part of the twin-arginine translocation (Tat) system that transports large folded proteins containing a characteristic twin-arginine motif in their signal peptide across membranes. Together with TatC, TatB is part of a receptor directly interacting with Tat signal peptides. TatB may form an oligomeric binding site that transiently accommodates folded Tat precursor proteins before their translocation. This Salmonella typhi protein is Sec-independent protein translocase protein TatB.